We begin with the raw amino-acid sequence, 282 residues long: Protoheme IX farnesyltransferase (282 aa).

9 helical membrane passes run 9 to 29 (LAKPGIIFGNLITLTGGFLLA), 39 to 59 (LPLFVYVMIGVALMIAAGCVF), 79 to 99 (LVTGDISVIQATIYGTILLIL), 102 to 122 (LVLYYLVNLLTLWIIIIGFIV), 139 to 159 (VLGGISGAIPPVAGYTAVVNI), 165 to 185 (LALFLILFFWQIPHSYAIAML), 210 to 230 (IMLFYLALFVVSCALPAVLGS), 231 to 251 (ADLFSFIVCMLVALFWMYKSI), and 261 to 281 (VFAKTVFKFSIIVITAICLTM).

Belongs to the UbiA prenyltransferase family. Protoheme IX farnesyltransferase subfamily.

The protein resides in the cell inner membrane. The catalysed reaction is heme b + (2E,6E)-farnesyl diphosphate + H2O = Fe(II)-heme o + diphosphate. Its pathway is porphyrin-containing compound metabolism; heme O biosynthesis; heme O from protoheme: step 1/1. Its function is as follows. Converts heme B (protoheme IX) to heme O by substitution of the vinyl group on carbon 2 of heme B porphyrin ring with a hydroxyethyl farnesyl side group. This chain is Protoheme IX farnesyltransferase, found in Francisella tularensis subsp. holarctica (strain FTNF002-00 / FTA).